The following is a 252-amino-acid chain: Type I iodothyronine deiodinase (252 aa).

Residues 1–17 are Extracellular-facing; sequence MESLLQTIKLMLRYIQK. Residues 18 to 38 traverse the membrane as a helical; Signal-anchor for type III membrane protein segment; that stretch reads ALILFFLFLYVVVGKVLMFLF. At 39 to 252 the chain is on the cytoplasmic side; the sequence is PQTMASVLKS…EVCSVLEKKK (214 aa). Sec-130 is an active-site residue. Sec-130 is a non-standard amino acid (selenocysteine).

Belongs to the iodothyronine deiodinase family. In terms of assembly, predominantly monomer. Can form homodimers but homodimerization is not essential for enzyme activity.

Its subcellular location is the cell membrane. The protein localises to the endoplasmic reticulum membrane. It localises to the basolateral cell membrane. It carries out the reaction 3,3',5-triiodo-L-thyronine + iodide + A + H(+) = L-thyroxine + AH2. The enzyme catalyses 3,3',5'-triiodo-L-thyronine + iodide + A + H(+) = L-thyroxine + AH2. The catalysed reaction is 3,3'-diiodo-L-thyronine + iodide + A + H(+) = 3,3',5'-triiodo-L-thyronine + AH2. It catalyses the reaction 3,3'-diiodo-L-thyronine + iodide + A + H(+) = 3,3',5-triiodo-L-thyronine + AH2. It carries out the reaction 3'-iodo-L-thyronine + iodide + A + H(+) = 3',5'-diiodo-L-thyronine + AH2. The enzyme catalyses 3-iodo-L-thyronine + iodide + A + H(+) = 3,5-diiodo-L-thyronine + AH2. The catalysed reaction is 3-iodo-L-thyronine + iodide + A + H(+) = 3,3'-diiodo-L-thyronine + AH2. It catalyses the reaction 3,3'-diiodothyronamine + iodide + A + H(+) = 3,3',5'-triiodothyronamine + AH2. It carries out the reaction 3'-iodothyronamine + iodide + A + H(+) = 3',5'-diiodothyronamine + AH2. The enzyme catalyses 3-iodothyronamine + iodide + A + H(+) = 3,3'-diiodothyronamine + AH2. The catalysed reaction is 3,3'-diiodothyronamine + iodide + A + H(+) = 3,3',5-triiodothyronamine + AH2. It catalyses the reaction 3-iodothyronamine + iodide + A + H(+) = 3,5-diiodothyronamine + AH2. It carries out the reaction 3,3'-diiodo-L-thyronine sulfate + iodide + A + H(+) = 3,3',5'-triiodo-L-thyronine sulfate + AH2. The enzyme catalyses 3,3',5'-triiodo-L-thyronine sulfate + iodide + A + H(+) = L-thyroxine sulfate + AH2. The catalysed reaction is 3,3'-diiodo-L-thyronine sulfate + iodide + A + H(+) = 3,3',5-triiodo-L-thyronine sulfate + AH2. With respect to regulation, lacks sensitivity to 6-n-propylthiouracil. Its function is as follows. Plays a crucial role in the metabolism of thyroid hormones (TH) and has specific roles in TH activation and inactivation by deiodination. Catalyzes the deiodination of L-thyroxine (T4) to 3,5,3'-triiodothyronine (T3) and 3,3',5'-triiodothyronine (rT3) to 3,3'-diiodothyronine (3,3'-T2) via outer-ring deiodination (ORD). Catalyzes the deiodiantion of T4 to rT3 and T3 to 3,3'-T2 via inner-ring deiodination (IRD). Catalyzes the deiodination of 3',5'-diiodothyronine (3',5'-T2) to 3'-monoiodothyronine (3'-T1) via ORD. Catalyzes the deiodination of 3,5-diiodothyronine (3,5-T2) to 3-monoiodothyronine (3-T1) and 3,3'-T2 to 3-T1 via IRD. Catalyzes the phenolic ring deiodinations of 3,3',5'-triiodothyronamine, 3',5'-diiodothyronamine and 3,3'-diiodothyronamine as well as tyrosyl ring deiodinations of 3,5,3'-triiodothyronamine and 3,5-diiodothyronamine. Catalyzes the deiodination of L-thyroxine sulfate and 3,3',5-triiodo-L-thyronine sulfate via IRD and of 3,3',5'-triiodo-L-thyronine sulfate via ORD. The chain is Type I iodothyronine deiodinase (dio1) from Xenopus laevis (African clawed frog).